A 1203-amino-acid chain; its full sequence is Regulator of telomere elongation helicase 1 (1203 aa).

Residues 7–296 form the Helicase ATP-binding domain; it reads NGVTVDFPFQ…ARVTQQGELQ (290 aa). An ATP-binding site is contributed by 42–49; it reads SPTGTGKT. [4Fe-4S] cluster contacts are provided by Cys-145, Cys-163, Cys-172, and Cys-207. A Nuclear localization signal motif is present at residues 151–167; that stretch reads KKQESNHMQISLCRKKV. The DEAH box signature appears at 250 to 253; the sequence is DEAH. The Nuclear localization signal motif lies at 871–877; the sequence is QKGGRKK. Disordered stretches follow at residues 998 to 1020 and 1120 to 1203; these read QLDP…TSKG and TTGK…RSKQ. The segment covering 1123-1134 has biased composition (basic and acidic residues); sequence KDLELEGPRDES. A PIP-box motif is present at residues 1160–1167; the sequence is QSKISSFF. A compositionally biased stretch (basic and acidic residues) spans 1169–1181; the sequence is QRPDESVRSDDTT.

It belongs to the helicase family. RAD3/XPD subfamily. Interacts with TERF1. Interacts (via PIP-box) with PCNA; the interaction is direct and essential for suppressing telomere fragility. Interacts with MMS19; the interaction mediates the association of RTEL1 with the cytosolic iron-sulfur protein assembly (CIA) complex.

The protein localises to the nucleus. The catalysed reaction is ATP + H2O = ADP + phosphate + H(+). Functionally, a probable ATP-dependent DNA helicase implicated in telomere-length regulation, DNA repair and the maintenance of genomic stability. Acts as an anti-recombinase to counteract toxic recombination and limit crossover during meiosis. Regulates meiotic recombination and crossover homeostasis by physically dissociating strand invasion events and thereby promotes noncrossover repair by meiotic synthesis dependent strand annealing (SDSA) as well as disassembly of D loop recombination intermediates. Also disassembles T loops and prevents telomere fragility by counteracting telomeric G4-DNA structures, which together ensure the dynamics and stability of the telomere. The protein is Regulator of telomere elongation helicase 1 (Rtel1) of Mus spretus (Western Mediterranean mouse).